Reading from the N-terminus, the 369-residue chain is S-(hydroxymethyl)glutathione dehydrogenase (369 aa).

Cysteine 40, histidine 62, cysteine 92, cysteine 95, cysteine 98, cysteine 106, and cysteine 169 together coordinate Zn(2+).

This sequence belongs to the zinc-containing alcohol dehydrogenase family. Class-III subfamily. Homodimer. Requires Zn(2+) as cofactor.

The protein localises to the cytoplasm. It carries out the reaction S-(hydroxymethyl)glutathione + NADP(+) = S-formylglutathione + NADPH + H(+). It catalyses the reaction S-(hydroxymethyl)glutathione + NAD(+) = S-formylglutathione + NADH + H(+). The enzyme catalyses a primary alcohol + NAD(+) = an aldehyde + NADH + H(+). The catalysed reaction is a secondary alcohol + NAD(+) = a ketone + NADH + H(+). It carries out the reaction S-nitrosoglutathione + NADH + H(+) = S-(hydroxysulfenamide)glutathione + NAD(+). Functionally, has high formaldehyde dehydrogenase activity in the presence of glutathione and catalyzes the oxidation of normal alcohols in a reaction that is not GSH-dependent. In addition, hemithiolacetals other than those formed from GSH, including omega-thiol fatty acids, also are substrates. Also acts as a S-nitroso-glutathione reductase by catalyzing the NADH-dependent reduction of S-nitrosoglutathione. The polypeptide is S-(hydroxymethyl)glutathione dehydrogenase (frmA) (Photobacterium damsela subsp. piscicida (Pasteurella piscicida)).